Here is a 130-residue protein sequence, read N- to C-terminus: Glycine cleavage system H protein (130 aa).

The Lipoyl-binding domain occupies 25 to 107; that stretch reads IATIGITEFA…YGEGWFLKVR (83 aa). Lysine 66 carries the post-translational modification N6-lipoyllysine.

Belongs to the GcvH family. The glycine cleavage system is composed of four proteins: P, T, L and H. It depends on (R)-lipoate as a cofactor.

Its function is as follows. The glycine cleavage system catalyzes the degradation of glycine. The H protein shuttles the methylamine group of glycine from the P protein to the T protein. The chain is Glycine cleavage system H protein from Nostoc sp. (strain PCC 7120 / SAG 25.82 / UTEX 2576).